The chain runs to 156 residues: Putative pre-16S rRNA nuclease (156 aa).

The protein belongs to the YqgF nuclease family.

Its subcellular location is the cytoplasm. Could be a nuclease involved in processing of the 5'-end of pre-16S rRNA. In Ehrlichia chaffeensis (strain ATCC CRL-10679 / Arkansas), this protein is Putative pre-16S rRNA nuclease.